The primary structure comprises 800 residues: Internalin A (800 aa).

Residues 1–35 (MRKKRYVWLKSILVAILVFGSGVWINTSNGTNAQA) form the signal peptide. An LRRNT domain is found at 36–76 (ATITQDTPINQIFTDAALAEKMKTVLGKTNVTDTVSQTDLD). LRR repeat units lie at residues 77-98 (QVTT…EYLN), 99-120 (NLTQ…KDLT), 121-142 (KLVD…ANLT), 143-164 (NLTG…KNLT), 165-186 (NLNR…SGLT), 187-207 (NLQQ…ANLT), 208-229 (TLER…AKLT), 230-251 (NLES…GILT), 252-273 (NLDE…ASLT), 274-295 (NLTD…SGLT), 296-317 (KLTE…AGLT), 318-339 (ALTN…SNLK), 340-361 (NLTY…SSLT), 362-383 (KLQR…ANLT), and 384-405 (NINW…ANLT). One can recognise an LRRCT domain in the interval 416–505 (AWTNAPVNYK…AIFNAKFHVD (90 aa)). One copy of the B-1 repeat lies at 518–587 (LLTEPAKPVK…TTSQTVDYQG (70 aa)). The tract at residues 518-706 (LLTEPAKPVK…ITLYAQFTKN (189 aa)) is 3 X approximate tandem repeats, type B. The stretch at 588 to 657 (LLQEPTPPTK…STTQAVDYQG (70 aa)) is one B-2 repeat. A B-3 repeat occupies 658–706 (LLKEPKAPTKAGYTFKGWYDEKTDGKKWDFATDKMPANDITLYAQFTKN). Residues 705–757 (KNPVAPPTTGGNTPPTTNNGGNTTPPSANIPGSDTSNTSTGNSASTTSTMNAY) form a disordered region. Low complexity predominate over residues 711–753 (PTTGGNTPPTTNNGGNTTPPSANIPGSDTSNTSTGNSASTTST). The LPXTG sorting signal signature appears at 767 to 771 (LPTTG). At Thr770 the chain carries Pentaglycyl murein peptidoglycan amidated threonine. Residues 771–800 (GDSDNALYLLLGLLAVGTAMALTKKARASK) constitute a propeptide, removed by sortase A.

Belongs to the internalin family.

It localises to the secreted. The protein localises to the cell wall. Functionally, mediates the entry of Listeria monocytogenes into cells. Binds to host receptor cadherin-1 (E-cadherin, CDH1). The sequence is that of Internalin A (inlA) from Listeria monocytogenes serotype 1/2a (strain 10403S).